Consider the following 340-residue polypeptide: Ribosomal RNA small subunit methyltransferase C (340 aa).

The protein belongs to the methyltransferase superfamily. RsmC family. In terms of assembly, monomer.

It localises to the cytoplasm. The catalysed reaction is guanosine(1207) in 16S rRNA + S-adenosyl-L-methionine = N(2)-methylguanosine(1207) in 16S rRNA + S-adenosyl-L-homocysteine + H(+). Specifically methylates the guanine in position 1207 of 16S rRNA in the 30S particle. The polypeptide is Ribosomal RNA small subunit methyltransferase C (Vibrio vulnificus (strain CMCP6)).